A 351-amino-acid polypeptide reads, in one-letter code: S-adenosylmethionine:tRNA ribosyltransferase-isomerase (351 aa).

This sequence belongs to the QueA family. Monomer.

The protein resides in the cytoplasm. It catalyses the reaction 7-aminomethyl-7-carbaguanosine(34) in tRNA + S-adenosyl-L-methionine = epoxyqueuosine(34) in tRNA + adenine + L-methionine + 2 H(+). It participates in tRNA modification; tRNA-queuosine biosynthesis. In terms of biological role, transfers and isomerizes the ribose moiety from AdoMet to the 7-aminomethyl group of 7-deazaguanine (preQ1-tRNA) to give epoxyqueuosine (oQ-tRNA). The protein is S-adenosylmethionine:tRNA ribosyltransferase-isomerase of Idiomarina loihiensis (strain ATCC BAA-735 / DSM 15497 / L2-TR).